A 360-amino-acid chain; its full sequence is MKASLLKKLDVLSDRYEELTALLGDAEVISDQTRFRAYSREYAEVEPVILAFRDYRKVQADLEGAQALLKDSDPELRDLAEEEVAEARGRLAALGDSLQRMLLPKDPNDSRNVFLEIRAGTGGDEAAIFSGDLFRMYSRYAERQGWRVETLSENEGEHGGYKEVIARVEGDNVYAKLKFESGAHRVQRVPETESQGRIHTSACTVAVLPEPDEQAAIEINPADLRVDTYRSSGAGGQHVNKTDSAVRITHIPSGIVVECQEERSQHKNRAKAMAWLAAKLNDQQQAAAQQAIASTRKLLVGSGDRSERIRTYNFPQGRVTDHRINLTLYSLGEVMEGAVEQVIEPLLQEYQADQLAALGD.

The residue at position 237 (Q237) is an N5-methylglutamine.

Belongs to the prokaryotic/mitochondrial release factor family. In terms of processing, methylated by PrmC. Methylation increases the termination efficiency of RF1.

It localises to the cytoplasm. Functionally, peptide chain release factor 1 directs the termination of translation in response to the peptide chain termination codons UAG and UAA. The sequence is that of Peptide chain release factor 1 from Pseudomonas aeruginosa (strain LESB58).